The primary structure comprises 134 residues: Probable dihydroneopterin aldolase (134 aa).

Substrate is bound by residues glutamate 26, tyrosine 59, and 78-79 (IE). Lysine 106 functions as the Proton donor/acceptor in the catalytic mechanism.

It belongs to the DHNA family.

It catalyses the reaction 7,8-dihydroneopterin = 6-hydroxymethyl-7,8-dihydropterin + glycolaldehyde. Its pathway is cofactor biosynthesis; tetrahydrofolate biosynthesis; 2-amino-4-hydroxy-6-hydroxymethyl-7,8-dihydropteridine diphosphate from 7,8-dihydroneopterin triphosphate: step 3/4. Catalyzes the conversion of 7,8-dihydroneopterin to 6-hydroxymethyl-7,8-dihydropterin. This Chlamydia pneumoniae (Chlamydophila pneumoniae) protein is Probable dihydroneopterin aldolase (folB).